A 316-amino-acid chain; its full sequence is Probable peptidyl-tRNA hydrolase 2 (316 aa).

The segment at 1-127 is disordered; it reads MSENIPDIDP…SHPVDPQEPN (127 aa). The segment covering 44–53 has biased composition (polar residues); that stretch reads PTPSSVTVDN. The span at 75–89 shows a compositional bias: low complexity; sequence IPEVPIPSSAISISS. The region spanning 128–169 is the UBA domain; it reads EVNNEYLAHLLDLGFDEYTAVLALKRTNSAGVEQAVAWIVER. The segment at 170 to 193 is disordered; sequence SNESDFDEDSSSSENEADEEMGAV. Positions 173–190 are enriched in acidic residues; the sequence is SDFDEDSSSSENEADEEM.

The protein belongs to the PTH2 family.

It catalyses the reaction an N-acyl-L-alpha-aminoacyl-tRNA + H2O = an N-acyl-L-amino acid + a tRNA + H(+). Its function is as follows. The natural substrate for this enzyme may be peptidyl-tRNAs which drop off the ribosome during protein synthesis. This chain is Probable peptidyl-tRNA hydrolase 2, found in Caenorhabditis elegans.